The following is a 602-amino-acid chain: Isocyanide synthase A (602 aa).

Belongs to the isocyanide synthase family.

Functionally, isocyanide synthase involved in the biosynthesis of isocyanides (or isonitriles), a class of microbial secondary metabolites. The presence of an isonitrile moiety within a compound imparts unique biological (cytotoxic, antibacterial, and antiprotozoal) and chemical (transition metal coordination) properties and enables synthetic and biochemical applications. In Aspergillus fumigatus (strain ATCC MYA-4609 / CBS 101355 / FGSC A1100 / Af293) (Neosartorya fumigata), this protein is Isocyanide synthase A.